We begin with the raw amino-acid sequence, 158 residues long: Putative tyrosine-protein phosphatase OCA1 (158 aa).

The Tyrosine-protein phosphatase domain occupies 7–158 (NYGMVEENFY…DEELVFGASY (152 aa)). Cys99 (phosphocysteine intermediate) is an active-site residue.

Belongs to the protein-tyrosine phosphatase family.

It is found in the cytoplasm. It carries out the reaction O-phospho-L-tyrosyl-[protein] + H2O = L-tyrosyl-[protein] + phosphate. Functionally, putative tyrosine-protein phosphatase required for protection against superoxide stress. The chain is Putative tyrosine-protein phosphatase OCA1 (OCA1) from Mycosarcoma maydis (Corn smut fungus).